A 576-amino-acid chain; its full sequence is Proline--tRNA ligase (576 aa).

The protein belongs to the class-II aminoacyl-tRNA synthetase family. ProS type 1 subfamily. As to quaternary structure, homodimer.

The protein resides in the cytoplasm. The enzyme catalyses tRNA(Pro) + L-proline + ATP = L-prolyl-tRNA(Pro) + AMP + diphosphate. Functionally, catalyzes the attachment of proline to tRNA(Pro) in a two-step reaction: proline is first activated by ATP to form Pro-AMP and then transferred to the acceptor end of tRNA(Pro). As ProRS can inadvertently accommodate and process non-cognate amino acids such as alanine and cysteine, to avoid such errors it has two additional distinct editing activities against alanine. One activity is designated as 'pretransfer' editing and involves the tRNA(Pro)-independent hydrolysis of activated Ala-AMP. The other activity is designated 'posttransfer' editing and involves deacylation of mischarged Ala-tRNA(Pro). The misacylated Cys-tRNA(Pro) is not edited by ProRS. The sequence is that of Proline--tRNA ligase from Finegoldia magna (strain ATCC 29328 / DSM 20472 / WAL 2508) (Peptostreptococcus magnus).